Reading from the N-terminus, the 452-residue chain is NADH-cytochrome b5 reductase-like protein alnC (452 aa).

A Cytochrome b5 heme-binding domain is found at 4–80 (PASITLAEVA…LKTLLVGSLQ (77 aa)). 33-38 (AEYRED) contributes to the FMN binding site. Heme is bound by residues His39 and His63. FMN-binding positions include 80–83 (QSKT) and 116–125 (NDTSKYGQLP). 2 helical membrane-spanning segments follow: residues 120 to 140 (KYGQ…FFTL) and 166 to 186 (VGFL…ATFV). Positions 225 to 324 (NTQQFLTLVD…RGPFGRYSPS (100 aa)) constitute an FAD-binding FR-type domain. Position 302–305 (302–305 (YLLN)) interacts with FAD. NADP(+) is bound by residues 389 to 390 (GQ) and 395 to 399 (WKGLR).

This sequence belongs to the flavoprotein pyridine nucleotide cytochrome reductase family. The cofactor is FAD. FMN is required as a cofactor.

It is found in the membrane. It functions in the pathway polyketide biosynthesis. NADH-cytochrome b5 reductase-like protein; part of the gene cluster that mediates the biosynthesis of asperlin, a polyketide showing anti-inflammatory, antitumor and antibiotic activities. The first step of the asperlin biosynthesis is the production of the intermediate 2,4,6-octatrienoic acid by the highly redusing polyketide synthase alnA with cleavage of the PKS product by the esterase alnB. 2,4,6-octatrienoic acid is further converted to asperlin via several steps involving the remaining enzymes from the cluster. The protein is NADH-cytochrome b5 reductase-like protein alnC of Emericella nidulans (strain FGSC A4 / ATCC 38163 / CBS 112.46 / NRRL 194 / M139) (Aspergillus nidulans).